Here is a 759-residue protein sequence, read N- to C-terminus: Phosphoribosylformylglycinamidine synthase subunit PurL (759 aa).

The active site involves histidine 46. ATP is bound by residues tyrosine 49 and lysine 88. Residue glutamate 90 participates in Mg(2+) binding. Substrate-binding positions include 91-94 (SHNH) and arginine 113. The active-site Proton acceptor is the histidine 92. Aspartate 114 serves as a coordination point for Mg(2+). Glutamine 237 lines the substrate pocket. Residue aspartate 265 participates in Mg(2+) binding. Residue 309-311 (ESQ) participates in substrate binding. Residues aspartate 498 and glycine 535 each coordinate ATP. Mg(2+) is bound at residue asparagine 536. Serine 538 contacts substrate.

The protein belongs to the FGAMS family. As to quaternary structure, monomer. Part of the FGAM synthase complex composed of 1 PurL, 1 PurQ and 2 PurS subunits.

It localises to the cytoplasm. The catalysed reaction is N(2)-formyl-N(1)-(5-phospho-beta-D-ribosyl)glycinamide + L-glutamine + ATP + H2O = 2-formamido-N(1)-(5-O-phospho-beta-D-ribosyl)acetamidine + L-glutamate + ADP + phosphate + H(+). It functions in the pathway purine metabolism; IMP biosynthesis via de novo pathway; 5-amino-1-(5-phospho-D-ribosyl)imidazole from N(2)-formyl-N(1)-(5-phospho-D-ribosyl)glycinamide: step 1/2. Its function is as follows. Part of the phosphoribosylformylglycinamidine synthase complex involved in the purines biosynthetic pathway. Catalyzes the ATP-dependent conversion of formylglycinamide ribonucleotide (FGAR) and glutamine to yield formylglycinamidine ribonucleotide (FGAM) and glutamate. The FGAM synthase complex is composed of three subunits. PurQ produces an ammonia molecule by converting glutamine to glutamate. PurL transfers the ammonia molecule to FGAR to form FGAM in an ATP-dependent manner. PurS interacts with PurQ and PurL and is thought to assist in the transfer of the ammonia molecule from PurQ to PurL. The protein is Phosphoribosylformylglycinamidine synthase subunit PurL of Anaeromyxobacter dehalogenans (strain 2CP-C).